A 329-amino-acid polypeptide reads, in one-letter code: NAC domain-containing protein 79 (329 aa).

Residues 17–167 (LPPGFRFHPT…EWVICRVFHK (151 aa)) enclose the NAC domain. Residues 114 to 173 (VGMKKTLVFYRGRAPKGQKTNWVMHEYRLDGKLSAHNLPKTAKNEWVICRVFHKTAGGKK) mediate DNA binding.

As to expression, expressed at low levels in leaves.

It localises to the nucleus. This is NAC domain-containing protein 79 from Arabidopsis thaliana (Mouse-ear cress).